The chain runs to 520 residues: 4-hydroxyphenylacetate 3-monooxygenase oxygenase component (520 aa).

The protein belongs to the FADH(2)-utilizing monooxygenase family. 4-HPA 3-monooxygenase consists of a reductase component HpaC and an oxygenase component HpaB.

It catalyses the reaction 4-hydroxyphenylacetate + FADH2 + O2 = 3,4-dihydroxyphenylacetate + FAD + H2O + H(+). Its pathway is aromatic compound metabolism; 4-hydroxyphenylacetate degradation; pyruvate and succinate semialdehyde from 4-hydroxyphenylacetate: step 1/7. Its function is as follows. Utilizes FADH(2) supplied by HpaC or by another flavin reductase, to catalyze the hydroxylation of 4-hydroxyphenylacetic acid, leading to the production of 3,4-DHPA. Can also oxidize phenol to catechol, and hydroxylate other phenol derivatives. This Escherichia coli protein is 4-hydroxyphenylacetate 3-monooxygenase oxygenase component (hpaB).